Consider the following 69-residue polypeptide: Microcin H47 immunity protein MchI (69 aa).

The Cytoplasmic portion of the chain corresponds to 1-6 (MSYKKL). Residues 7 to 29 (YQLTAIFSLPLTILLVSLSSLRI) form a helical membrane-spanning segment. At 30 to 38 (VGEGNSYVD) the chain is on the periplasmic side. Residues 39 to 61 (VFLSFIIFLGFIELIHGIRKILV) form a helical membrane-spanning segment. Topologically, residues 62–69 (WSGWKNGS) are cytoplasmic.

Its subcellular location is the cell membrane. Its function is as follows. Protects a microcin H47-producer cell against microcin H47. The chain is Microcin H47 immunity protein MchI (mchI) from Escherichia coli.